A 119-amino-acid chain; its full sequence is Protein TraH (119 aa).

A disordered region spans residues methionine 1–alanine 67. A compositionally biased stretch (low complexity) spans alanine 41 to proline 54.

In terms of biological role, the initiation process of transfer DNA synthesis requires the interaction of at least three plasmid-specific components (TraH, TraI, and TraJ) at the transfer origin resulting in the assembly of a specialized nucleoprotein complex - the relaxosome. The polypeptide is Protein TraH (traH) (Escherichia coli).